The sequence spans 423 residues: DUF21 domain-containing protein At2g14520 (423 aa).

The Extracellular portion of the chain corresponds to 1–11; the sequence is MAVEYECCGTS. In terms of domain architecture, CNNM transmembrane spans 8–191; sequence CGTSFFIHIA…GKGGELTHDE (184 aa). The helical transmembrane segment at 12 to 32 threads the bilayer; it reads FFIHIAVIVLLVLFAGLMSGL. At 33–70 the chain is on the cytoplasmic side; the sequence is TLGLMSMSLVDLEVLAKSGTPRDRIHAAKILPVVKNQH. A helical membrane pass occupies residues 71–91; sequence LLLCTLLICNAAAMEALPIFL. The Extracellular segment spans residues 92 to 94; sequence DAL. The chain crosses the membrane as a helical span at residues 95–115; sequence VTAWGAILISVTLILLFGEII. Over 116-136 the chain is Cytoplasmic; it reads PQSVCSRHGLAIGATVAPFVR. Residues 137–157 form a helical membrane-spanning segment; it reads VLVWICLPVAWPISKLLDFLL. At 158–423 the chain is on the extracellular side; sequence GHGRVALFRR…DETDHHFEDL (266 aa). Residues 210–271 enclose the CBS 1 domain; it reads MTPISDTFVI…TINPDEEIQV (62 aa). Residues asparagine 273 and asparagine 322 are each glycosylated (N-linked (GlcNAc...) asparagine). 2 consecutive CBS domains span residues 275–332 and 356–415; these read TIRR…RVDV and PNRA…IFDE.

The protein resides in the membrane. In Arabidopsis thaliana (Mouse-ear cress), this protein is DUF21 domain-containing protein At2g14520 (CBSDUF3).